A 213-amino-acid chain; its full sequence is Imidazole glycerol phosphate synthase subunit HisH (213 aa).

In terms of domain architecture, Glutamine amidotransferase type-1 spans 6–213 (LVTVIDYGMG…FKNFLNWNGQ (208 aa)). The Nucleophile role is filled by Cys86. Catalysis depends on residues His192 and Glu194.

Heterodimer of HisH and HisF.

It localises to the cytoplasm. It carries out the reaction 5-[(5-phospho-1-deoxy-D-ribulos-1-ylimino)methylamino]-1-(5-phospho-beta-D-ribosyl)imidazole-4-carboxamide + L-glutamine = D-erythro-1-(imidazol-4-yl)glycerol 3-phosphate + 5-amino-1-(5-phospho-beta-D-ribosyl)imidazole-4-carboxamide + L-glutamate + H(+). The enzyme catalyses L-glutamine + H2O = L-glutamate + NH4(+). Its pathway is amino-acid biosynthesis; L-histidine biosynthesis; L-histidine from 5-phospho-alpha-D-ribose 1-diphosphate: step 5/9. In terms of biological role, IGPS catalyzes the conversion of PRFAR and glutamine to IGP, AICAR and glutamate. The HisH subunit catalyzes the hydrolysis of glutamine to glutamate and ammonia as part of the synthesis of IGP and AICAR. The resulting ammonia molecule is channeled to the active site of HisF. The polypeptide is Imidazole glycerol phosphate synthase subunit HisH (Hydrogenovibrio crunogenus (strain DSM 25203 / XCL-2) (Thiomicrospira crunogena)).